The chain runs to 396 residues: Methionine import ATP-binding protein MetN 2 (396 aa).

The ABC transporter domain occupies 41 to 280 (VSFELVGKVF…PRHGATRALL (240 aa)). 77–84 (GRSGAGKS) serves as a coordination point for ATP.

Belongs to the ABC transporter superfamily. Methionine importer (TC 3.A.1.24) family. In terms of assembly, the complex is composed of two ATP-binding proteins (MetN), two transmembrane proteins (MetI) and a solute-binding protein (MetQ).

It localises to the cell inner membrane. The enzyme catalyses L-methionine(out) + ATP + H2O = L-methionine(in) + ADP + phosphate + H(+). The catalysed reaction is D-methionine(out) + ATP + H2O = D-methionine(in) + ADP + phosphate + H(+). Functionally, part of the ABC transporter complex MetNIQ involved in methionine import. Responsible for energy coupling to the transport system. The protein is Methionine import ATP-binding protein MetN 2 of Burkholderia pseudomallei (strain K96243).